A 190-amino-acid chain; its full sequence is Ras-like GTP-binding protein RhoL (190 aa).

A GTP-binding site is contributed by Gly-18–Thr-25. Positions Tyr-40 to His-48 match the Effector region motif. GTP contacts are provided by residues Asp-65–Gln-69 and Thr-123–Asp-126. Position 187 is a cysteine methyl ester (Cys-187). The S-geranylgeranyl cysteine moiety is linked to residue Cys-187. Positions Lys-188 to Leu-190 are cleaved as a propeptide — removed in mature form.

The protein belongs to the small GTPase superfamily. Rho family. As to expression, highly expressed in the embryonic cephalic mesoderm starting from stage 6 and fading by stage 11. Hemocyte precursor cells.

It is found in the cell membrane. Functionally, essential for the maturation of hemocytes. This chain is Ras-like GTP-binding protein RhoL (RhoL), found in Drosophila melanogaster (Fruit fly).